Here is a 620-residue protein sequence, read N- to C-terminus: Transcription factor GTE11 (620 aa).

Positions methionine 1–threonine 35 are disordered. One can recognise a Bromo domain in the interval threonine 124–isoleucine 230. The region spanning asparagine 270 to aspartate 351 is the NET domain. A Phosphoserine modification is found at serine 417. The transcription activation domain stretch occupies residues glutamate 445–aspartate 620. The stretch at asparagine 470–asparagine 544 forms a coiled coil. Disordered regions lie at residues lysine 491–lysine 511 and glutamate 597–aspartate 620.

As to quaternary structure, interacts with BT1, BT2 and BT4.

The protein localises to the nucleus. The chain is Transcription factor GTE11 (GTE11) from Arabidopsis thaliana (Mouse-ear cress).